A 206-amino-acid polypeptide reads, in one-letter code: MIVQKKKHRSNRWLLEHFQDQYVKAAKKNNIRSRAWFKLEQLDKNNKIFKIGMNVIDLGAAPGSWSQYASNRIGKKGRIIACDILPIRPITGVDIFQGDFRNKKTLNLMLNTFSNITFHLVMSDMAPNITGNFSIDMPRIIELCKLALKISEHVLSKNGIFLLKSFQGEGFNELYKEIKMLFKKIKICKPKTSRTRSREIFILATR.

S-adenosyl-L-methionine-binding residues include glycine 63, tryptophan 65, aspartate 83, aspartate 99, and aspartate 124. Lysine 164 (proton acceptor) is an active-site residue.

It belongs to the class I-like SAM-binding methyltransferase superfamily. RNA methyltransferase RlmE family.

It is found in the cytoplasm. The enzyme catalyses uridine(2552) in 23S rRNA + S-adenosyl-L-methionine = 2'-O-methyluridine(2552) in 23S rRNA + S-adenosyl-L-homocysteine + H(+). Functionally, specifically methylates the uridine in position 2552 of 23S rRNA at the 2'-O position of the ribose in the fully assembled 50S ribosomal subunit. The protein is Ribosomal RNA large subunit methyltransferase E of Buchnera aphidicola subsp. Acyrthosiphon pisum (strain APS) (Acyrthosiphon pisum symbiotic bacterium).